The sequence spans 1902 residues: PII-type proteinase (1902 aa).

The first 33 residues, 1 to 33 (MQRKKKGLSILLAGTVALGALAVLPVGEIQAKA), serve as a signal peptide directing secretion. A propeptide spanning residues 34 to 187 (AISQQTKGSS…VTLAKVYYPT (154 aa)) is cleaved from the precursor. The 507-residue stretch at 191–697 (ANSMANVQAV…AGLVDVKAAI (507 aa)) folds into the Peptidase S8 domain. Catalysis depends on charge relay system residues D217, H281, and S620. The segment at 1796–1874 (GKGDGTTGTS…GALPKTGETT (79 aa)) is disordered. The span at 1797–1812 (KGDGTTGTSDKGGGQG) shows a compositional bias: gly residues. The segment covering 1830-1843 (SQPSSGGNIPTNPA) has biased composition (polar residues). The LPXTG sorting signal signature appears at 1867–1871 (LPKTG). The residue at position 1870 (T1870) is a Pentaglycyl murein peptidoglycan amidated threonine. Positions 1871–1902 (GETTERPAFGFLGVIVVSLMGVLGLKRKQREE) are cleaved as a propeptide — removed by sortase.

Belongs to the peptidase S8 family.

It is found in the secreted. The protein localises to the cell wall. The catalysed reaction is Endopeptidase activity with very broad specificity, although some subsite preference have been noted, e.g. large hydrophobic residues in the P1 and P4 positions, and Pro in the P2 position. Best known for its action on caseins, although it has been shown to hydrolyze hemoglobin and oxidized insulin B-chain.. Its function is as follows. Protease which breaks down milk proteins during the growth of the bacteria on milk. This Lactococcus lactis subsp. cremoris (Streptococcus cremoris) protein is PII-type proteinase (prt).